A 94-amino-acid chain; its full sequence is Large ribosomal subunit protein eL31 (94 aa).

This sequence belongs to the eukaryotic ribosomal protein eL31 family.

This chain is Large ribosomal subunit protein eL31 (rpl31e), found in Pyrococcus abyssi (strain GE5 / Orsay).